The chain runs to 236 residues: 15,16-dihydrobiliverdin:ferredoxin oxidoreductase (236 aa).

The protein belongs to the HY2 family.

It carries out the reaction 15,16-dihydrobiliverdin + oxidized 2[4Fe-4S]-[ferredoxin] = biliverdin IXalpha + reduced 2[4Fe-4S]-[ferredoxin] + 2 H(+). Functionally, catalyzes the two-electron reduction of biliverdin IX-alpha at the C15 methine bridge. The chain is 15,16-dihydrobiliverdin:ferredoxin oxidoreductase (pebA) from Synechococcus sp. (strain WH8020).